The sequence spans 363 residues: uncharacterized protein (363 aa).

This is an uncharacterized protein from Saccharomyces cerevisiae (strain ATCC 204508 / S288c) (Baker's yeast).